Consider the following 387-residue polypeptide: Pepsin-3 (387 aa).

Positions M1 to C15 are cleaved as a signal peptide. A propeptide spans I16–F59 (activation peptide). Positions Y75 to A384 constitute a Peptidase A1 domain. D93 is a catalytic residue. Disulfide bonds link C106-C111 and C267-C271. The active site involves D276. A disulfide bond links C310 and C343.

Belongs to the peptidase A1 family.

It localises to the secreted. It carries out the reaction Preferential cleavage: hydrophobic, preferably aromatic, residues in P1 and P1' positions. Cleaves 1-Phe-|-Val-2, 4-Gln-|-His-5, 13-Glu-|-Ala-14, 14-Ala-|-Leu-15, 15-Leu-|-Tyr-16, 16-Tyr-|-Leu-17, 23-Gly-|-Phe-24, 24-Phe-|-Phe-25 and 25-Phe-|-Tyr-26 bonds in the B chain of insulin.. In terms of biological role, shows particularly broad specificity; although bonds involving phenylalanine and leucine are preferred, many others are also cleaved to some extent. The sequence is that of Pepsin-3 from Oryctolagus cuniculus (Rabbit).